Here is a 121-residue protein sequence, read N- to C-terminus: Large ribosomal subunit protein uL22 (121 aa).

The protein belongs to the universal ribosomal protein uL22 family. Part of the 50S ribosomal subunit.

In terms of biological role, this protein binds specifically to 23S rRNA; its binding is stimulated by other ribosomal proteins, e.g. L4, L17, and L20. It is important during the early stages of 50S assembly. It makes multiple contacts with different domains of the 23S rRNA in the assembled 50S subunit and ribosome. Functionally, the globular domain of the protein is located near the polypeptide exit tunnel on the outside of the subunit, while an extended beta-hairpin is found that lines the wall of the exit tunnel in the center of the 70S ribosome. This Paenarthrobacter aurescens (strain TC1) protein is Large ribosomal subunit protein uL22.